The chain runs to 379 residues: Cytochrome b (379 aa).

4 helical membrane passes run 33–53, 77–98, 113–133, and 178–198; these read FGSLLGLCLIAQILTGLFLAM, WLIRNMHANGASFFFICIYLHI, WNVGVVLLLLVMMTAFVGYVL, and FFAFHFLLPFIGAAATLVHLI. Histidine 83 and histidine 97 together coordinate heme b. Residues histidine 182 and histidine 196 each coordinate heme b. Histidine 201 contributes to the a ubiquinone binding site. The next 4 helical transmembrane spans lie at 226–246, 288–308, 320–340, and 347–367; these read YKDILGFTFLLTALIALALFS, LGGVLALLASILVLMVVPLLH, FTQVLFWLLIADVAILTWIGG, and FIIIGQVASFLYFSLFLVLAP.

This sequence belongs to the cytochrome b family. The cytochrome bc1 complex contains 3 respiratory subunits (MT-CYB, CYC1 and UQCRFS1), 2 core proteins (UQCRC1 and UQCRC2) and probably 6 low-molecular weight proteins. Heme b is required as a cofactor.

Its subcellular location is the mitochondrion inner membrane. In terms of biological role, component of the ubiquinol-cytochrome c reductase complex (complex III or cytochrome b-c1 complex) that is part of the mitochondrial respiratory chain. The b-c1 complex mediates electron transfer from ubiquinol to cytochrome c. Contributes to the generation of a proton gradient across the mitochondrial membrane that is then used for ATP synthesis. The polypeptide is Cytochrome b (mt-cyb) (Poeciliopsis occidentalis (Gila topminnow)).